The chain runs to 680 residues: Protein terminal ear1 homolog (680 aa).

The RRM domain maps to 223–295 (SLVVLNSLPA…RRLVVEYTRP (73 aa)). Disordered stretches follow at residues 294–415 (RPSL…SWRG) and 593–680 (TEPV…GYTD). Low complexity-rich tracts occupy residues 328-340 (PSQS…SGSG) and 379-403 (SAAA…KQSQ). Gly residues predominate over residues 404-413 (KGGGGRGGSW). 2 stretches are compositionally biased toward low complexity: residues 602-621 (SPAP…CAAS) and 634-648 (SSSG…SSNA). Positions 656 to 666 (HGETGGDRGDD) are enriched in basic and acidic residues.

In terms of tissue distribution, highly expressed in shoot apex and inflorescence apex, at intermediate levels in roots and at low levels in leaf blade and leaf sheath.

In terms of biological role, probable RNA-binding protein. Involved in the regular timing (plastochron) of lateral organs formation. May regulate the rate of leaf initiation and the duration of vegetative phase. Seems to be redundant to the function of PLASTOCHRON1, but to act in an independent pathway. This is Protein terminal ear1 homolog (PLA2) from Oryza sativa subsp. indica (Rice).